Reading from the N-terminus, the 647-residue chain is Endogenous retrovirus group K member 8 Gag polyprotein (647 aa).

A lipid anchor (N-myristoyl glycine) is attached at glycine 2. The interval 165–264 (GKGPELVGPS…APPSRQGSEL (100 aa)) is disordered. Residues 232 to 247 (GMPPAPQGREPYPQPP) show a composition bias toward pro residues. CCHC-type zinc fingers lie at residues 544-561 (GKCY…NCPV) and 580-597 (DLCP…QCRS). The disordered stretch occupies residues 598-641 (KFDKNGQPLSGNEQRGQPQAPQQTGAFPIQPFVPQGFQDNNPHC). Positions 604-622 (QPLSGNEQRGQPQAPQQTG) are enriched in polar residues.

Belongs to the beta type-B retroviral Gag protein family. HERV class-II K(HML-2) gag subfamily. Post-translationally, myristoylation is essential for retroviral assembly. Alteration of the glycine residue leads to a block in the budding of particles and an accumulation of Gag inside the cell. Specific enzymatic cleavages may yield mature proteins.

Its subcellular location is the cell membrane. The products of the Gag polyproteins of infectious retroviruses perform highly complex orchestrated tasks during the assembly, budding, maturation, and infection stages of the viral replication cycle. During viral assembly, the proteins form membrane associations and self-associations that ultimately result in budding of an immature virion from the infected cell. Gag precursors also function during viral assembly to selectively bind and package two plus strands of genomic RNA. Endogenous Gag proteins may have kept, lost or modified their original function during evolution. This is Endogenous retrovirus group K member 8 Gag polyprotein (ERVK-8) from Homo sapiens (Human).